Reading from the N-terminus, the 254-residue chain is HLA class II histocompatibility antigen, DQ alpha 1 chain (254 aa).

Positions 1-23 (MILNKALMLGALALTTVMSPCGG) are cleaved as a signal peptide. Residues 24–119 (EDIVADHVAS…EVPEVTVFSK (96 aa)) form an alpha-1 region. At 24 to 216 (EDIVADHVAS…IPAPMSELTE (193 aa)) the chain is on the extracellular side. Asn-103 and Asn-143 each carry an N-linked (GlcNAc...) asparagine glycan. An Ig-like C1-type domain is found at 112-204 (PEVTVFSKSP…LDKPLLKHWE (93 aa)). An alpha-2 region spans residues 120 to 203 (SPVTLGQPNI…GLDKPLLKHW (84 aa)). Cys-132 and Cys-188 form a disulfide bridge. A connecting peptide region spans residues 204–216 (EPEIPAPMSELTE). A helical transmembrane segment spans residues 217–239 (TVVCALGLSVGLVGIVVGTVFII). The Cytoplasmic portion of the chain corresponds to 240–254 (RGLRSVGASRHQGPL).

The protein belongs to the MHC class II family. Heterodimer of an alpha and a beta subunit; also referred as MHC class II molecule. In the endoplasmic reticulum (ER) it forms a heterononamer; 3 MHC class II molecules bind to a CD74 homotrimer (also known as invariant chain or HLA class II histocompatibility antigen gamma chain). In the endosomal/lysosomal system; CD74 undergoes sequential degradation by various proteases; leaving a small fragment termed CLIP on each MHC class II molecule. MHC class II molecule interacts with HLA_DM, and HLA_DO in B-cells, in order to release CLIP and facilitate the binding of antigenic peptides.

The protein localises to the cell membrane. The protein resides in the endoplasmic reticulum membrane. Its subcellular location is the golgi apparatus. It localises to the trans-Golgi network membrane. It is found in the endosome membrane. The protein localises to the lysosome membrane. Functionally, binds peptides derived from antigens that access the endocytic route of antigen presenting cells (APC) and presents them on the cell surface for recognition by the CD4 T-cells. The peptide binding cleft accommodates peptides of 10-30 residues. The peptides presented by MHC class II molecules are generated mostly by degradation of proteins that access the endocytic route, where they are processed by lysosomal proteases and other hydrolases. Exogenous antigens that have been endocytosed by the APC are thus readily available for presentation via MHC II molecules, and for this reason this antigen presentation pathway is usually referred to as exogenous. As membrane proteins on their way to degradation in lysosomes as part of their normal turn-over are also contained in the endosomal/lysosomal compartments, exogenous antigens must compete with those derived from endogenous components. Autophagy is also a source of endogenous peptides, autophagosomes constitutively fuse with MHC class II loading compartments. In addition to APCs, other cells of the gastrointestinal tract, such as epithelial cells, express MHC class II molecules and CD74 and act as APCs, which is an unusual trait of the GI tract. To produce a MHC class II molecule that presents an antigen, three MHC class II molecules (heterodimers of an alpha and a beta chain) associate with a CD74 trimer in the ER to form a heterononamer. Soon after the entry of this complex into the endosomal/lysosomal system where antigen processing occurs, CD74 undergoes a sequential degradation by various proteases, including CTSS and CTSL, leaving a small fragment termed CLIP (class-II-associated invariant chain peptide). The removal of CLIP is facilitated by HLA-DM via direct binding to the alpha-beta-CLIP complex so that CLIP is released. HLA-DM stabilizes MHC class II molecules until primary high affinity antigenic peptides are bound. The MHC II molecule bound to a peptide is then transported to the cell membrane surface. In B-cells, the interaction between HLA-DM and MHC class II molecules is regulated by HLA-DO. Primary dendritic cells (DCs) also to express HLA-DO. Lysosomal microenvironment has been implicated in the regulation of antigen loading into MHC II molecules, increased acidification produces increased proteolysis and efficient peptide loading. This chain is HLA class II histocompatibility antigen, DQ alpha 1 chain (HLA-DQA1), found in Homo sapiens (Human).